The sequence spans 121 residues: Small ribosomal subunit protein uS13 (121 aa).

The interval 97–121 (PVRGQKTHSNARTRKGPRASRIKKK) is disordered. Positions 101 to 121 (QKTHSNARTRKGPRASRIKKK) are enriched in basic residues.

The protein belongs to the universal ribosomal protein uS13 family. Part of the 30S ribosomal subunit. Forms a loose heterodimer with protein S19. Forms two bridges to the 50S subunit in the 70S ribosome.

Functionally, located at the top of the head of the 30S subunit, it contacts several helices of the 16S rRNA. In the 70S ribosome it contacts the 23S rRNA (bridge B1a) and protein L5 of the 50S subunit (bridge B1b), connecting the 2 subunits; these bridges are implicated in subunit movement. Contacts the tRNAs in the A and P-sites. This Kosmotoga olearia (strain ATCC BAA-1733 / DSM 21960 / TBF 19.5.1) protein is Small ribosomal subunit protein uS13.